The primary structure comprises 313 residues: HPr kinase/phosphorylase (313 aa).

Residues His141 and Lys162 contribute to the active site. Gly156 to Ser163 contributes to the ATP binding site. Ser163 is a binding site for Mg(2+). Asp180 serves as the catalytic Proton acceptor; for phosphorylation activity. Proton donor; for dephosphorylation activity. Residues Ile203–Asp212 form an important for the catalytic mechanism of both phosphorylation and dephosphorylation region. A Mg(2+)-binding site is contributed by Glu204. The active site involves Arg247. The important for the catalytic mechanism of dephosphorylation stretch occupies residues Pro268–Arg273.

This sequence belongs to the HPrK/P family. Homohexamer. It depends on Mg(2+) as a cofactor.

The catalysed reaction is [HPr protein]-L-serine + ATP = [HPr protein]-O-phospho-L-serine + ADP + H(+). The enzyme catalyses [HPr protein]-O-phospho-L-serine + phosphate + H(+) = [HPr protein]-L-serine + diphosphate. Its function is as follows. Catalyzes the ATP- as well as the pyrophosphate-dependent phosphorylation of a specific serine residue in HPr, a phosphocarrier protein of the phosphoenolpyruvate-dependent sugar phosphotransferase system (PTS). HprK/P also catalyzes the pyrophosphate-producing, inorganic phosphate-dependent dephosphorylation (phosphorolysis) of seryl-phosphorylated HPr (P-Ser-HPr). The two antagonistic activities of HprK/P are regulated by several intracellular metabolites, which change their concentration in response to the absence or presence of rapidly metabolisable carbon sources (glucose, fructose, etc.) in the growth medium. Therefore, by controlling the phosphorylation state of HPr, HPrK/P is a sensor enzyme that plays a major role in the regulation of carbon metabolism and sugar transport: it mediates carbon catabolite repression (CCR), and regulates PTS-catalyzed carbohydrate uptake and inducer exclusion. This is HPr kinase/phosphorylase from Mycoplasma mycoides subsp. mycoides SC (strain CCUG 32753 / NCTC 10114 / PG1).